The sequence spans 109 residues: Cell division protein ZapA (109 aa).

Residues 22 to 99 (EQQDALNLAA…IEQALLEQGR (78 aa)) adopt a coiled-coil conformation.

The protein belongs to the ZapA family. Type 1 subfamily. Homodimer. Interacts with FtsZ.

It localises to the cytoplasm. In terms of biological role, activator of cell division through the inhibition of FtsZ GTPase activity, therefore promoting FtsZ assembly into bundles of protofilaments necessary for the formation of the division Z ring. It is recruited early at mid-cell but it is not essential for cell division. This is Cell division protein ZapA from Erwinia tasmaniensis (strain DSM 17950 / CFBP 7177 / CIP 109463 / NCPPB 4357 / Et1/99).